A 122-amino-acid chain; its full sequence is Large ribosomal subunit protein bL17 (122 aa).

It belongs to the bacterial ribosomal protein bL17 family. As to quaternary structure, part of the 50S ribosomal subunit. Contacts protein L32.

The chain is Large ribosomal subunit protein bL17 from Staphylococcus epidermidis (strain ATCC 35984 / DSM 28319 / BCRC 17069 / CCUG 31568 / BM 3577 / RP62A).